The following is a 505-amino-acid chain: Trans-cinnamate 4-monooxygenase (505 aa).

A helical membrane pass occupies residues 3-23; sequence LILLEKSLLAVFFAVIFSIIV. Residues 213–218 and alanine 306 each bind (E)-cinnamate; that span reads RSRLAQ. Residue cysteine 447 coordinates heme.

The protein belongs to the cytochrome P450 family. It depends on heme as a cofactor. Mostly expressed in stems, and, to a lower extent, in bulbs, roots, leaves and flowers.

It is found in the membrane. The enzyme catalyses (E)-cinnamate + reduced [NADPH--hemoprotein reductase] + O2 = (E)-4-coumarate + oxidized [NADPH--hemoprotein reductase] + H2O + H(+). Its pathway is alkaloid biosynthesis. It functions in the pathway phenylpropanoid metabolism; trans-4-coumarate biosynthesis; trans-4-coumarate from trans-cinnamate: step 1/1. In terms of biological role, catalyzes the first oxidative step of the phenylpropanoid pathway in higher plants by transforming trans-cinnamate into p-coumarate. The compounds formed by this pathway are essential components for lignification, pollination, and defense against ultraviolet light, predators and pathogens. Trans-4-coumarate is a precursor to all amaryllidaceae alkaloids such as galanthamine, lycorine and haemanthamine, and including haemanthamine- and crinamine-type alkaloids, promising anticancer agents. The chain is Trans-cinnamate 4-monooxygenase from Narcissus pseudonarcissus (Daffodil).